Reading from the N-terminus, the 210-residue chain is UPF0173 protein PYRAB01190 (210 aa).

This sequence belongs to the UPF0173 family.

This Pyrococcus abyssi (strain GE5 / Orsay) protein is UPF0173 protein PYRAB01190.